The chain runs to 747 residues: E3 UFM1-protein ligase 1 homolog (747 aa).

Positions 403 to 468 (EKKKQCGSKA…GTVQVNSEEL (66 aa)) are disordered. The segment covering 429 to 438 (GGKGGKKGGK) has biased composition (basic residues). The segment covering 439 to 449 (GGKNGGGGGKG) has biased composition (gly residues). The segment covering 450 to 465 (ATSSVPTGSGTVQVNS) has biased composition (polar residues).

This sequence belongs to the UFL1 family.

Its function is as follows. E3 UFM1-protein ligase that mediates ufmylation of target proteins. In Caenorhabditis briggsae, this protein is E3 UFM1-protein ligase 1 homolog (ufl-1).